The following is a 1040-amino-acid chain: MSDSVLSNPTRQHATLREILARRDWENPACTNYQRLPAHPPFNSWRNVAAAHQDEPSQRLRRLNGEWKFSYFTRPEAVPESWLQQDLPDSATIPVPSNWQLQGYDTPIYTNVKYPIPVNPPYVPEDNPTGCYSLTFKVNHDWLSCGQTRVIFDGVNSAFYLWCNGHWVGYSQDSRLPAEFDISRYLTTGENRLAVMVLRWSDGSYLEDQDMWRMSGIFRDVTLLHKPTVHLGDIQLTTPLSADFRHGTLDIQVKATLSESEAKNYRVHAQLWRGNNLIGETRQAFGSDIVDERGTYHDRASLRLDVTRPDLWSAELPHLYRAVIALETAEGELLEAEAYDVGFRKVEISNGLLLLNGKPLLIRGVNRHEHHPQNGQVMDEETMRRDIMLMKQHNFNAVRCSHYPNHPLWYRLCDRYGLYVVDEANIETHGMQPMNRLSDDPMWLPAYSERVSRMVQRDRNHPCIIIWSLGNESGYGANHDALYQWIKRHDPTRPVHYEGGGANSRATDIVCPMYARVDEDQPFPNVPKWSISKWISMPNEHRPLILCEYAHAMGNSLGGFARYWKAFRQYPRLQGGFIWDWVDQALIRHDEQGNAYWAYGGDFGDMPNDRQFCLDGLLFPDRTPHPSLYEAQRAQQHIQFVWQAESPCELRVTSEYLFRHTDNEQLNWHITLDDKTLVEGSLPLKLAPQATQTLTLLESLPTVDRAGEIWLNVEVVQPKETAWSKANHRCAWDQWQLPIPLHLPEASCSKQKIPPVLRASDIYFDVVQGEQHWRFNRQSGLLEQWWTADTPALLTPLQDQFVRAPLDNDIGISEVDRIDPHAWAERWKSAGLYQLQTQCVAIQADQLADAVHIVTEHVFRHAGQILLRSKKRWQIDAYGVMTVDVDVDVATVLPSLARVGLSCQLADVAPQVSWIGLGPHENYPDRQLAAQHGHWNLPLDDLHTPYIFPSENGLRCNTRALTYGKWAITGNFHFGLSRYGLTQLMTCTHHHLLEKEKGVWLNLDGFHMGIGGDDSWSPSVHCDDLLTATHYHYRVAIQRH.

Residues N111 and D210 each coordinate substrate. D210 is a Na(+) binding site. Mg(2+) contacts are provided by E427, H429, and E472. Residues E472 and 548–551 each bind substrate; that span reads EYAH. The active-site Proton donor is E472. E548 acts as the Nucleophile in catalysis. N608 lines the Mg(2+) pocket. Residues F612 and D615 each coordinate Na(+). D615 and W1016 together coordinate substrate.

The protein belongs to the glycosyl hydrolase 2 family. As to quaternary structure, homotetramer. Requires Mg(2+) as cofactor. The cofactor is Na(+).

The enzyme catalyses Hydrolysis of terminal non-reducing beta-D-galactose residues in beta-D-galactosides.. The polypeptide is Beta-galactosidase (Pectobacterium atrosepticum (strain SCRI 1043 / ATCC BAA-672) (Erwinia carotovora subsp. atroseptica)).